Consider the following 352-residue polypeptide: tRNA N6-adenosine threonylcarbamoyltransferase (352 aa).

Positions 117 and 121 each coordinate Fe cation. Residues 140 to 144, Asp-173, Gly-186, and Asn-287 contribute to the substrate site; that span reads LVSGG. A Fe cation-binding site is contributed by Asp-315.

This sequence belongs to the KAE1 / TsaD family. The cofactor is Fe(2+).

The protein localises to the cytoplasm. It catalyses the reaction L-threonylcarbamoyladenylate + adenosine(37) in tRNA = N(6)-L-threonylcarbamoyladenosine(37) in tRNA + AMP + H(+). Its function is as follows. Required for the formation of a threonylcarbamoyl group on adenosine at position 37 (t(6)A37) in tRNAs that read codons beginning with adenine. Is involved in the transfer of the threonylcarbamoyl moiety of threonylcarbamoyl-AMP (TC-AMP) to the N6 group of A37, together with TsaE and TsaB. TsaD likely plays a direct catalytic role in this reaction. The protein is tRNA N6-adenosine threonylcarbamoyltransferase of Psychrobacter cryohalolentis (strain ATCC BAA-1226 / DSM 17306 / VKM B-2378 / K5).